A 340-amino-acid chain; its full sequence is Ubiquitin-like domain-containing CTD phosphatase (340 aa).

In terms of domain architecture, Ubiquitin-like spans 24–101; it reads LTLTVKWNGK…MTMIGTVEDD (78 aa). Residues 151-312 form the FCP1 homology domain; it reads CRQGKKLLVL…VKLTQYLLTI (162 aa). The interval 151-312 is phosphatase; that stretch reads CRQGKKLLVL…VKLTQYLLTI (162 aa). Mg(2+)-binding residues include aspartate 161, aspartate 163, and aspartate 271.

Mg(2+) is required as a cofactor.

It localises to the nucleus. The enzyme catalyses O-phospho-L-seryl-[protein] + H2O = L-seryl-[protein] + phosphate. It catalyses the reaction O-phospho-L-threonyl-[protein] + H2O = L-threonyl-[protein] + phosphate. In terms of biological role, dephosphorylates 26S nuclear proteasomes, thereby decreasing their proteolytic activity. The dephosphorylation may prevent assembly of the core and regulatory particles (CP and RP) into mature 26S proteasome. The sequence is that of Ubiquitin-like domain-containing CTD phosphatase from Arabidopsis thaliana (Mouse-ear cress).